The following is a 302-amino-acid chain: uncharacterized protein (302 aa).

Disordered stretches follow at residues 1-167 (MPCR…QSSE) and 180-199 (PSLCPSQTGTASTASPQRAS). Residues 39-54 (EESHAPSRDPRDHQGS) are compositionally biased toward basic and acidic residues. Polar residues-rich tracts occupy residues 123-133 (LSTSSCASVSR) and 183-197 (CPSQTGTASTASPQR).

This is an uncharacterized protein from Homo sapiens (Human).